The following is a 293-amino-acid chain: Elongation factor Ts (293 aa).

The involved in Mg(2+) ion dislocation from EF-Tu stretch occupies residues 79 to 82; that stretch reads TDFV.

This sequence belongs to the EF-Ts family.

Its subcellular location is the cytoplasm. In terms of biological role, associates with the EF-Tu.GDP complex and induces the exchange of GDP to GTP. It remains bound to the aminoacyl-tRNA.EF-Tu.GTP complex up to the GTP hydrolysis stage on the ribosome. The polypeptide is Elongation factor Ts (Bacillus pumilus (strain SAFR-032)).